A 1803-amino-acid chain; its full sequence is Pyruvate dehydrogenase [NADP(+)], mitochondrial (1803 aa).

The N-terminal 37 residues, Met1 to Tyr37, are a transit peptide targeting the mitochondrion. 4Fe-4S ferredoxin-type domains lie at Phe747 to Leu776 and Phe802 to Ala831. Cys756, Cys759, Cys762, Cys766, Cys811, Cys814, Cys817, and Cys821 together coordinate [4Fe-4S] cluster. Residues Val1248–Trp1391 enclose the Flavodoxin-like domain. One can recognise an FAD-binding FR-type domain in the interval Lys1425–Asp1650. Residues Tyr1458 to Glu1469 and Ile1585 to Ala1595 each bind FAD.

This sequence in the N-terminal section; belongs to the pyruvate:ferredoxin/flavodoxin oxidoreductase family. Homodimer. It depends on FAD as a cofactor. FMN serves as cofactor. Requires thiamine diphosphate as cofactor. Iron-sulfur cluster is required as a cofactor.

Its subcellular location is the mitochondrion. It catalyses the reaction pyruvate + NADP(+) + CoA = acetyl-CoA + CO2 + NADPH. Its function is as follows. Pyruvate dehydrogenase [NADP(+)] is one of three enzymes participating in respiratory metabolism. The enzyme is also active with 2-oxobutyrate and oxaloacetate. The enzyme is oxygen sensitive. The polypeptide is Pyruvate dehydrogenase [NADP(+)], mitochondrial (PNO) (Euglena gracilis).